The following is a 306-amino-acid chain: Homoserine O-acetyltransferase (306 aa).

Residue Cys-142 is the Acyl-thioester intermediate of the active site. The substrate site is built by Lys-163 and Ser-192. His-235 (proton acceptor) is an active-site residue. Residue Glu-237 is part of the active site. Arg-249 serves as a coordination point for substrate.

This sequence belongs to the MetA family.

The protein resides in the cytoplasm. It catalyses the reaction L-homoserine + acetyl-CoA = O-acetyl-L-homoserine + CoA. It participates in amino-acid biosynthesis; L-methionine biosynthesis via de novo pathway; O-acetyl-L-homoserine from L-homoserine: step 1/1. Functionally, transfers an acetyl group from acetyl-CoA to L-homoserine, forming acetyl-L-homoserine. The protein is Homoserine O-acetyltransferase of Brevibacillus brevis (strain 47 / JCM 6285 / NBRC 100599).